Reading from the N-terminus, the 419-residue chain is Altered inheritance of mitochondria protein 6 (419 aa).

The signal sequence occupies residues methionine 1–serine 31.

This sequence belongs to the AIM6 family.

The chain is Altered inheritance of mitochondria protein 6 (AIM6) from Kluyveromyces lactis (strain ATCC 8585 / CBS 2359 / DSM 70799 / NBRC 1267 / NRRL Y-1140 / WM37) (Yeast).